Consider the following 159-residue polypeptide: Ribosomal RNA large subunit methyltransferase H (159 aa).

Residues Leu-76, Gly-108, and 127–132 (FSKMTL) contribute to the S-adenosyl-L-methionine site.

The protein belongs to the RNA methyltransferase RlmH family. In terms of assembly, homodimer.

The protein localises to the cytoplasm. The enzyme catalyses pseudouridine(1915) in 23S rRNA + S-adenosyl-L-methionine = N(3)-methylpseudouridine(1915) in 23S rRNA + S-adenosyl-L-homocysteine + H(+). Its function is as follows. Specifically methylates the pseudouridine at position 1915 (m3Psi1915) in 23S rRNA. This is Ribosomal RNA large subunit methyltransferase H from Bacillus mycoides (strain KBAB4) (Bacillus weihenstephanensis).